A 155-amino-acid chain; its full sequence is Protein-export protein SecB (155 aa).

It belongs to the SecB family. In terms of assembly, homotetramer, a dimer of dimers. One homotetramer interacts with 1 SecA dimer.

The protein resides in the cytoplasm. Functionally, one of the proteins required for the normal export of preproteins out of the cell cytoplasm. It is a molecular chaperone that binds to a subset of precursor proteins, maintaining them in a translocation-competent state. It also specifically binds to its receptor SecA. The chain is Protein-export protein SecB from Escherichia fergusonii (strain ATCC 35469 / DSM 13698 / CCUG 18766 / IAM 14443 / JCM 21226 / LMG 7866 / NBRC 102419 / NCTC 12128 / CDC 0568-73).